Here is a 283-residue protein sequence, read N- to C-terminus: Probable protein phosphatase 2C 17 (283 aa).

The region spanning 32–282 (KYGFSLIKGK…DDISCIVVRF (251 aa)) is the PPM-type phosphatase domain. Asp69, Gly70, Asp234, and Asp273 together coordinate Mn(2+).

The protein belongs to the PP2C family. Mg(2+) is required as a cofactor. Requires Mn(2+) as cofactor.

The enzyme catalyses O-phospho-L-seryl-[protein] + H2O = L-seryl-[protein] + phosphate. The catalysed reaction is O-phospho-L-threonyl-[protein] + H2O = L-threonyl-[protein] + phosphate. This Arabidopsis thaliana (Mouse-ear cress) protein is Probable protein phosphatase 2C 17.